A 662-amino-acid chain; its full sequence is Transketolase (662 aa).

Substrate is bound at residue histidine 28. Thiamine diphosphate is bound by residues histidine 68 and 115–117 (GPL). Aspartate 156 contributes to the Mg(2+) binding site. Glycine 157 and asparagine 186 together coordinate thiamine diphosphate. Mg(2+)-binding residues include asparagine 186 and isoleucine 188. Histidine 261, arginine 356, and serine 383 together coordinate substrate. Histidine 261 is a thiamine diphosphate binding site. Residue glutamate 410 is the Proton donor of the active site. Phenylalanine 436 provides a ligand contact to thiamine diphosphate. Positions 460, 468, and 519 each coordinate substrate.

The protein belongs to the transketolase family. Homodimer. Requires Mg(2+) as cofactor. It depends on Ca(2+) as a cofactor. The cofactor is Mn(2+). Co(2+) is required as a cofactor. Thiamine diphosphate serves as cofactor.

The enzyme catalyses D-sedoheptulose 7-phosphate + D-glyceraldehyde 3-phosphate = aldehydo-D-ribose 5-phosphate + D-xylulose 5-phosphate. Its pathway is carbohydrate biosynthesis; Calvin cycle. The protein operates within carbohydrate degradation; pentose phosphate pathway. In terms of biological role, catalyzes the transfer of a two-carbon ketol group from a ketose donor to an aldose acceptor, via a covalent intermediate with the cofactor thiamine pyrophosphate. The chain is Transketolase (tkt) from Staphylococcus epidermidis (strain ATCC 35984 / DSM 28319 / BCRC 17069 / CCUG 31568 / BM 3577 / RP62A).